Consider the following 704-residue polypeptide: Structure-specific endonuclease subunit SLX1 homolog (704 aa).

Residues 4–90 enclose the GIY-YIG domain; sequence RFHCVYLLTS…TASARLRHTI (87 aa). 3 disordered regions span residues 157–180, 290–323, and 354–378; these read ESPR…ADGV, ASFA…RVRT, and GAAL…SRPP. 2 stretches are compositionally biased toward polar residues: residues 161–175 and 311–320; these read VGTQ…SLQG and AGSSTPSPQR. An SLX1-type zinc finger spans residues 446–526; that stretch reads CSLCALPLQP…PSQPCPCPLC (81 aa). Disordered stretches follow at residues 601-629 and 650-671; these read VPGA…SSPI and ASLA…GHSN. Low complexity predominate over residues 650–662; sequence ASLAALSPTSASP.

Belongs to the SLX1 family. In terms of assembly, forms a heterodimer with a member of the SLX4 family. A divalent metal cation serves as cofactor.

It localises to the nucleus. In terms of biological role, catalytic subunit of a heterodimeric structure-specific endonuclease that resolves DNA secondary structures generated during DNA repair and recombination. Has endonuclease activity towards branched DNA substrates, introducing single-strand cuts in duplex DNA close to junctions with ss-DNA. The chain is Structure-specific endonuclease subunit SLX1 homolog from Leishmania major.